A 549-amino-acid polypeptide reads, in one-letter code: Polynucleotide 5'-hydroxyl-kinase nol-9 (549 aa).

190–197 lines the ATP pocket; the sequence is GHKGAGKS.

This sequence belongs to the Clp1 family. NOL9/GRC3 subfamily.

The protein localises to the nucleus. The protein resides in the nucleolus. Polynucleotide 5'-kinase involved in rRNA processing. This chain is Polynucleotide 5'-hydroxyl-kinase nol-9 (nol-9), found in Caenorhabditis elegans.